The sequence spans 96 residues: Putative membrane protein insertion efficiency factor (96 aa).

Residues 68–96 form a disordered region; sequence DPVPEHFPARHPRPQGSPPTDHPPTDQPS. The segment covering 82–96 has biased composition (pro residues); that stretch reads QGSPPTDHPPTDQPS.

The protein belongs to the UPF0161 family.

The protein localises to the cell membrane. In terms of biological role, could be involved in insertion of integral membrane proteins into the membrane. This Deinococcus radiodurans (strain ATCC 13939 / DSM 20539 / JCM 16871 / CCUG 27074 / LMG 4051 / NBRC 15346 / NCIMB 9279 / VKM B-1422 / R1) protein is Putative membrane protein insertion efficiency factor.